A 244-amino-acid chain; its full sequence is Pyridoxal phosphate homeostasis protein (244 aa).

Residue Lys-37 is modified to N6-(pyridoxal phosphate)lysine.

This sequence belongs to the pyridoxal phosphate-binding protein YggS/PROSC family.

Pyridoxal 5'-phosphate (PLP)-binding protein, which may be involved in intracellular homeostatic regulation of pyridoxal 5'-phosphate (PLP), the active form of vitamin B6. The protein is Pyridoxal phosphate homeostasis protein of Caenorhabditis elegans.